Here is a 164-residue protein sequence, read N- to C-terminus: UPF0114 protein YqhA (164 aa).

Helical transmembrane passes span 10–32 (YASR…ALAL), 53–75 (LILV…MVMF), and 136–155 (LMWY…VMGY).

This sequence belongs to the UPF0114 family.

The protein localises to the cell membrane. The polypeptide is UPF0114 protein YqhA (Salmonella typhi).